A 172-amino-acid polypeptide reads, in one-letter code: Translationally-controlled tumor protein homolog (172 aa).

The TCTP domain maps to 1–172; sequence MIIFKDLLTG…FKHGLDEEKV (172 aa).

This sequence belongs to the TCTP family. As to expression, expressed by the venom gland.

Its subcellular location is the secreted. Venom protein that causes edema, enhances vascular permeability and is likely related to the inflammatory activity of the venom. The protein is Translationally-controlled tumor protein homolog of Loxosceles intermedia (Brown spider).